A 369-amino-acid polypeptide reads, in one-letter code: Histone deacetylase 8 (369 aa).

A histone deacetylase region spans residues 5–316 (LLPVYIHSAE…WTYLTALIVG (312 aa)). Substrate is bound at residue aspartate 93. The Proton acceptor role is filled by histidine 135. Glycine 143 serves as a coordination point for substrate. Aspartate 170, histidine 172, and aspartate 259 together coordinate a divalent metal cation. Tyrosine 298 is a substrate binding site.

This sequence belongs to the histone deacetylase family. HD type 1 subfamily. A divalent metal cation is required as a cofactor.

The protein resides in the nucleus. The protein localises to the chromosome. It is found in the cytoplasm. It carries out the reaction N(6)-acetyl-L-lysyl-[histone] + H2O = L-lysyl-[histone] + acetate. It catalyses the reaction N(6)-acetyl-L-lysyl-[protein] + H2O = L-lysyl-[protein] + acetate. The catalysed reaction is N(6)-(2E)-butenoyl-L-lysyl-[protein] + H2O = (2E)-2-butenoate + L-lysyl-[protein]. With respect to regulation, its activity is inhibited by trichostatin A (TSA) and butyrate, 2 well known histone deacetylase inhibitors. Histone deacetylase that catalyzes the deacetylation of lysine residues on the N-terminal part of the core histones (H2A, H2B, H3 and H4). Histone deacetylation gives a tag for epigenetic repression and plays an important role in transcriptional regulation, cell cycle progression and developmental events. Histone deacetylases act via the formation of large multiprotein complexes. Also involved in the deacetylation of non-histone proteins. In addition to protein deacetylase activity, also has protein-lysine deacylase activity: acts as a protein decrotonylase by mediating decrotonylation ((2E)-butenoyl) of histones. The protein is Histone deacetylase 8 (hdac8) of Xenopus tropicalis (Western clawed frog).